The chain runs to 757 residues: Glutathione biosynthesis bifunctional protein GshAB (757 aa).

The tract at residues 1–337 (MNIQQIVKEK…LGRARLGEVA (337 aa)) is glutamate--cysteine ligase. The ATP-grasp domain occupies 494–757 (KKVLAKAGFN…VLGMLFPELV (264 aa)). 521 to 580 (PLFEGKAVVIKPKSTNFGLGISIFQQGVHDKADFAKAVEIAFREDKEVMVEDYLVGTEYR) provides a ligand contact to ATP. Mg(2+) is bound by residues Asp-702, Glu-723, and Asn-725. 3 residues coordinate Mn(2+): Asp-702, Glu-723, and Asn-725.

This sequence in the N-terminal section; belongs to the glutamate--cysteine ligase type 1 family. Type 2 subfamily. As to quaternary structure, monomer. It depends on Mg(2+) as a cofactor. Requires Mn(2+) as cofactor.

It catalyses the reaction L-cysteine + L-glutamate + ATP = gamma-L-glutamyl-L-cysteine + ADP + phosphate + H(+). It carries out the reaction gamma-L-glutamyl-L-cysteine + glycine + ATP = glutathione + ADP + phosphate + H(+). It functions in the pathway sulfur metabolism; glutathione biosynthesis; glutathione from L-cysteine and L-glutamate: step 1/2. The protein operates within sulfur metabolism; glutathione biosynthesis; glutathione from L-cysteine and L-glutamate: step 2/2. In terms of biological role, synthesizes glutathione from L-glutamate and L-cysteine via gamma-L-glutamyl-L-cysteine. The polypeptide is Glutathione biosynthesis bifunctional protein GshAB (Mannheimia succiniciproducens (strain KCTC 0769BP / MBEL55E)).